The primary structure comprises 128 residues: uncharacterized protein (128 aa).

This is an uncharacterized protein from Mycoplasma genitalium (strain ATCC 33530 / DSM 19775 / NCTC 10195 / G37) (Mycoplasmoides genitalium).